The sequence spans 123 residues: Large ribosomal subunit protein uL29 (123 aa).

It belongs to the universal ribosomal protein uL29 family.

This Theileria parva (East coast fever infection agent) protein is Large ribosomal subunit protein uL29 (RPL35).